The sequence spans 316 residues: Coiled-coil domain-containing protein 42 (316 aa).

Coiled-coil stretches lie at residues S39–L146 and L178–R232.

It belongs to the CFAP73 family. Interacts with ODF1 and ODF2. Interacts with CCDC38. Interacts with CCDC146. Interacts with CFAP53.

It localises to the cytoplasm. It is found in the perinuclear region. The protein resides in the cytoskeleton. The protein localises to the cell projection. Its subcellular location is the cilium. It localises to the flagellum. It is found in the microtubule organizing center. The protein resides in the centrosome. Its function is as follows. Essential for male fertility. Required for sperm development. This chain is Coiled-coil domain-containing protein 42, found in Homo sapiens (Human).